The chain runs to 134 residues: Small ribosomal subunit protein uS11 (134 aa).

This sequence belongs to the universal ribosomal protein uS11 family. Part of the 30S ribosomal subunit. Interacts with proteins S7 and S18. Binds to IF-3.

Its function is as follows. Located on the platform of the 30S subunit, it bridges several disparate RNA helices of the 16S rRNA. Forms part of the Shine-Dalgarno cleft in the 70S ribosome. The chain is Small ribosomal subunit protein uS11 from Corynebacterium glutamicum (strain R).